The following is a 335-amino-acid chain: Ketol-acid reductoisomerase (NADP(+)) (335 aa).

Residues 2 to 182 (AKIIYDNETT…GATRAGVYET (181 aa)) enclose the KARI N-terminal Rossmann domain. NADP(+) is bound by residues 25–28 (YGSQ), R48, S51, S53, and 83–86 (DENQ). Residue H108 is part of the active site. NADP(+) is bound at residue G134. The KARI C-terminal knotted domain maps to 183-328 (TFREETETDL…KQIRANIPWL (146 aa)). D191, E195, E227, and E231 together coordinate Mg(2+). S252 contributes to the substrate binding site.

The protein belongs to the ketol-acid reductoisomerase family. Requires Mg(2+) as cofactor.

It carries out the reaction (2R)-2,3-dihydroxy-3-methylbutanoate + NADP(+) = (2S)-2-acetolactate + NADPH + H(+). The catalysed reaction is (2R,3R)-2,3-dihydroxy-3-methylpentanoate + NADP(+) = (S)-2-ethyl-2-hydroxy-3-oxobutanoate + NADPH + H(+). It participates in amino-acid biosynthesis; L-isoleucine biosynthesis; L-isoleucine from 2-oxobutanoate: step 2/4. The protein operates within amino-acid biosynthesis; L-valine biosynthesis; L-valine from pyruvate: step 2/4. Involved in the biosynthesis of branched-chain amino acids (BCAA). Catalyzes an alkyl-migration followed by a ketol-acid reduction of (S)-2-acetolactate (S2AL) to yield (R)-2,3-dihydroxy-isovalerate. In the isomerase reaction, S2AL is rearranged via a Mg-dependent methyl migration to produce 3-hydroxy-3-methyl-2-ketobutyrate (HMKB). In the reductase reaction, this 2-ketoacid undergoes a metal-dependent reduction by NADPH to yield (R)-2,3-dihydroxy-isovalerate. This is Ketol-acid reductoisomerase (NADP(+)) from Methanosarcina barkeri (strain Fusaro / DSM 804).